The chain runs to 509 residues: GMP synthase [glutamine-hydrolyzing] (509 aa).

The Glutamine amidotransferase type-1 domain maps to 4 to 193; the sequence is NVLILDFGSQ…LVKIAQVPQN (190 aa). Residue Cys-79 is the Nucleophile of the active site. Active-site residues include His-167 and Glu-169. Residues 194-384 enclose the GMPS ATP-PPase domain; sequence FTPNAFVSDM…LGIDAELLGR (191 aa). 221–227 lines the ATP pocket; the sequence is SGGVDST.

Homodimer.

The enzyme catalyses XMP + L-glutamine + ATP + H2O = GMP + L-glutamate + AMP + diphosphate + 2 H(+). It participates in purine metabolism; GMP biosynthesis; GMP from XMP (L-Gln route): step 1/1. Its function is as follows. Catalyzes the synthesis of GMP from XMP. The polypeptide is GMP synthase [glutamine-hydrolyzing] (Flavobacterium psychrophilum (strain ATCC 49511 / DSM 21280 / CIP 103535 / JIP02/86)).